Reading from the N-terminus, the 199-residue chain is 5'-deoxynucleotidase Ent638_2835 (199 aa).

Substrate-binding positions include Arg18–Trp19 and His33. In terms of domain architecture, HD spans Val30–Tyr142. Residues His33, His68, and Asp69 each contribute to the a divalent metal cation site. Substrate contacts are provided by residues Asp69, Asp77–Thr80, and Asp137. A divalent metal cation is bound at residue Asp137.

It belongs to the 5DNU family. Homodimer. A divalent metal cation serves as cofactor.

The protein resides in the cytoplasm. It carries out the reaction a 2'-deoxyribonucleoside 5'-phosphate + H2O = a 2'-deoxyribonucleoside + phosphate. Functionally, catalyzes the strictly specific dephosphorylation of 2'-deoxyribonucleoside 5'-monophosphates. The polypeptide is 5'-deoxynucleotidase Ent638_2835 (Enterobacter sp. (strain 638)).